Here is a 285-residue protein sequence, read N- to C-terminus: SLAM family member 9 (285 aa).

A signal peptide spans M1–G17. The Extracellular segment spans residues F18–L232. The Ig-like V-type domain maps to P25–R126. N-linked (GlcNAc...) asparagine glycans are attached at residues N37, N97, N141, N149, N175, and N206. Positions P134–S213 constitute an Ig-like C2-type domain. C154 and C198 are oxidised to a cystine. The helical transmembrane segment at L233 to F253 threads the bilayer. Topologically, residues R254–V285 are cytoplasmic.

It localises to the membrane. May play a role in the immune response. The chain is SLAM family member 9 (Slamf9) from Mus musculus (Mouse).